The following is a 95-amino-acid chain: Integration host factor subunit beta (95 aa).

Belongs to the bacterial histone-like protein family. Heterodimer of an alpha and a beta chain.

This protein is one of the two subunits of integration host factor, a specific DNA-binding protein that functions in genetic recombination as well as in transcriptional and translational control. In Shewanella loihica (strain ATCC BAA-1088 / PV-4), this protein is Integration host factor subunit beta.